The chain runs to 702 residues: Polyribonucleotide nucleotidyltransferase (702 aa).

Residues D485 and D491 each coordinate Mg(2+). The 61-residue stretch at 552–612 folds into the KH domain; the sequence is PRTEIICIDP…EGVKKAISII (61 aa). One can recognise an S1 motif domain in the interval 622 to 690; sequence GEIYLGKVTK…NQGRINLSRK (69 aa).

The protein belongs to the polyribonucleotide nucleotidyltransferase family. Requires Mg(2+) as cofactor.

It localises to the cytoplasm. It carries out the reaction RNA(n+1) + phosphate = RNA(n) + a ribonucleoside 5'-diphosphate. Functionally, involved in mRNA degradation. Catalyzes the phosphorolysis of single-stranded polyribonucleotides processively in the 3'- to 5'-direction. The polypeptide is Polyribonucleotide nucleotidyltransferase (Clostridium botulinum (strain Kyoto / Type A2)).